Here is a 64-residue protein sequence, read N- to C-terminus: ELLQNSGNPCCDPVTCKPREGEHCISGPCCRNCKFKRAGTVCLDAKGDWMNNYCTGISSDCPRN.

The Disintegrin domain maps to 1–64 (ELLQNSGNPC…TGISSDCPRN (64 aa)). Intrachain disulfides connect cysteine 10–cysteine 33, cysteine 24–cysteine 30, cysteine 29–cysteine 54, and cysteine 42–cysteine 61. A Cell attachment site; atypical (KGD) motif is present at residues 46–48 (KGD).

Belongs to the venom metalloproteinase (M12B) family. P-II subfamily. P-IIe sub-subfamily. In terms of assembly, heterodimer with VB7A; disulfide-linked. As to expression, expressed by the venom gland.

It is found in the secreted. Its function is as follows. Poor inhibitor of platelet aggregation. The disintegrin inhibits the adhesion of cells expressing the RGD-dependent integrin alpha-5/beta-1 (ITGA5/ITGB1) to immobilized fibronectin. Inhibition on alpha-IIb/beta-3 (ITGA2B/ITGB3) is low. This chain is Disintegrin VB7B, found in Vipera berus berus (Common viper).